The sequence spans 307 residues: tRNA pseudouridine synthase B (307 aa).

The active-site Nucleophile is Asp-38.

This sequence belongs to the pseudouridine synthase TruB family. Type 1 subfamily.

It catalyses the reaction uridine(55) in tRNA = pseudouridine(55) in tRNA. Its function is as follows. Responsible for synthesis of pseudouridine from uracil-55 in the psi GC loop of transfer RNAs. The sequence is that of tRNA pseudouridine synthase B from Bacillus thuringiensis (strain Al Hakam).